A 159-amino-acid chain; its full sequence is 4-deoxy-4-sulfo-D-erythrose isomerase (159 aa).

Cysteine 66 acts as the Proton acceptor in catalysis.

It belongs to the LacAB/RpiB family.

The catalysed reaction is 4-deoxy-4-sulfo-D-erythrose = 4-deoxy-4-sulfo-D-erythrulose. Functionally, part of the sulfo-TK pathway, a D-sulfoquinovose degradation pathway that produces 2-hydroxyethane-1-sulfonate (isethionate). Catalyzes the isomerization of 4-deoxy-4-sulfo-D-erythrose (SE) to 4-deoxy-4-sulfo-D-erythrulose (SEu). The polypeptide is 4-deoxy-4-sulfo-D-erythrose isomerase (Clostridium sp. (strain MSTE9)).